A 338-amino-acid chain; its full sequence is Anthranilate phosphoribosyltransferase (338 aa).

Residues Gly-78, 81 to 82 (GD), Thr-86, 88 to 91 (NIST), 106 to 114 (KHGNRSVSS), and Ser-118 contribute to the 5-phospho-alpha-D-ribose 1-diphosphate site. Residue Gly-78 participates in anthranilate binding. Position 90 (Ser-90) interacts with Mg(2+). Position 109 (Asn-109) interacts with anthranilate. Arg-164 contacts anthranilate. Residues Asp-223 and Glu-224 each coordinate Mg(2+).

It belongs to the anthranilate phosphoribosyltransferase family. Homodimer. The cofactor is Mg(2+).

It carries out the reaction N-(5-phospho-beta-D-ribosyl)anthranilate + diphosphate = 5-phospho-alpha-D-ribose 1-diphosphate + anthranilate. It functions in the pathway amino-acid biosynthesis; L-tryptophan biosynthesis; L-tryptophan from chorismate: step 2/5. Functionally, catalyzes the transfer of the phosphoribosyl group of 5-phosphorylribose-1-pyrophosphate (PRPP) to anthranilate to yield N-(5'-phosphoribosyl)-anthranilate (PRA). This chain is Anthranilate phosphoribosyltransferase, found in Bacillus subtilis (strain 168).